Reading from the N-terminus, the 411-residue chain is MAPSISRGLLLLAALCCLAPSFLAEDAQETDTSQQDQSPTYRKISSNLADFAFSLYRELVHQSNTSNIFFSPMSITTAFAMLSLGSKGDTRKQILEGLEFNLTQIPEADIHKAFHHLLQTLNRPDSELQLNTGNGLFVNKNLKLVEKFLEEVKNNYHSEAFSVNFADSEEAKKVINDYVEKGTQGKIVDLMKQLDEDTVFALVNYIFFKGKWKRPFNPEHTRDADFHVDKSTTVKVPMMNRLGMFDMHYCSTLSSWVLMMDYLGNATAIFLLPDDGKMQHLEQTLTKDLISRFLLNRQTRSAILYFPKLSISGTYNLKTLLSSLGITRVFNNDADLSGITEDAPLKLSQAVHKAVLTLDERGTEAAGATVVEAVPMSLPPQVKFDHPFIFMIVESETQSPLFVGKVIDPTR.

A signal peptide spans 1-24 (MAPSISRGLLLLAALCCLAPSFLA). A Phosphoserine modification is found at Ser33. 3 N-linked (GlcNAc...) asparagine glycosylation sites follow: Asn64, Asn101, and Asn265. An RCL region spans residues 367–386 (GATVVEAVPMSLPPQVKFDH). The residue at position 377 (Ser377) is a Phosphoserine.

It belongs to the serpin family. As to quaternary structure, interacts with CELA2A. Interacts with ERGIC3 and LMAN1/ERGIC53. Interacts with PRSS1/Trypsin. Plasma.

Its subcellular location is the secreted. In terms of biological role, inhibitor of serine proteases. The primary target is elastase, but also has a moderate affinity for plasmin and thrombin. The protein is Alpha-1-antiproteinase (Serpina1) of Rattus norvegicus (Rat).